Consider the following 148-residue polypeptide: Large ribosomal subunit protein uL15B (148 aa).

2 stretches are compositionally biased toward basic residues: residues 1–13 (MPTH…KLRG) and 21–31 (RIGKHRKHPGG). The segment at 1 to 38 (MPTHTSKTRKLRGHVSAGHGRIGKHRKHPGGRGKAGGL) is disordered. At tyrosine 108 the chain carries Phosphotyrosine.

This sequence belongs to the universal ribosomal protein uL15 family. Component of the large ribosomal subunit (LSU). Mature yeast ribosomes consist of a small (40S) and a large (60S) subunit. The 40S small subunit contains 1 molecule of ribosomal RNA (18S rRNA) and at least 33 different proteins. The large 60S subunit contains 3 rRNA molecules (25S, 5.8S and 5S rRNA) and at least 46 different proteins.

It localises to the cytoplasm. The protein localises to the nucleus. Its subcellular location is the nucleolus. Component of the ribosome, a large ribonucleoprotein complex responsible for the synthesis of proteins in the cell. The small ribosomal subunit (SSU) binds messenger RNAs (mRNAs) and translates the encoded message by selecting cognate aminoacyl-transfer RNA (tRNA) molecules. The large subunit (LSU) contains the ribosomal catalytic site termed the peptidyl transferase center (PTC), which catalyzes the formation of peptide bonds, thereby polymerizing the amino acids delivered by tRNAs into a polypeptide chain. The nascent polypeptides leave the ribosome through a tunnel in the LSU and interact with protein factors that function in enzymatic processing, targeting, and the membrane insertion of nascent chains at the exit of the ribosomal tunnel. This is Large ribosomal subunit protein uL15B (rpl2801) from Schizosaccharomyces pombe (strain 972 / ATCC 24843) (Fission yeast).